Here is a 124-residue protein sequence, read N- to C-terminus: uncharacterized protein (124 aa).

Residues 62-72 (KKNKKQTFLKH) are compositionally biased toward basic residues. The interval 62 to 86 (KKNKKQTFLKHHQSDDHSENKVYKS) is disordered. Positions 73 to 83 (HQSDDHSENKV) are enriched in basic and acidic residues. Residues 80 to 112 (ENKVYKSKKLEKKIQQLNKKKQLIDTKINFLKE) adopt a coiled-coil conformation.

This is an uncharacterized protein from Dictyostelium discoideum (Social amoeba).